We begin with the raw amino-acid sequence, 165 residues long: Protein SprT (165 aa).

The SprT-like domain maps to 22 to 163 (LAQANLKLDR…RCVHCGEPLV (142 aa)). H78 is a binding site for Zn(2+). The active site involves E79. Position 82 (H82) interacts with Zn(2+).

Belongs to the SprT family. Zn(2+) serves as cofactor.

It localises to the cytoplasm. The sequence is that of Protein SprT from Salmonella paratyphi A (strain ATCC 9150 / SARB42).